Consider the following 103-residue polypeptide: Flagellar hook-basal body complex protein FliE (103 aa).

Belongs to the FliE family.

The protein localises to the bacterial flagellum basal body. The chain is Flagellar hook-basal body complex protein FliE from Yersinia enterocolitica serotype O:8 / biotype 1B (strain NCTC 13174 / 8081).